The chain runs to 382 residues: MGDWSALGKLLDKVQAYSTAGGKVWLSVLFIFRILLLGTAVESAWGDEQSAFRCNTQQPGCENVCYDKSFPISHVRFWVLQIIFVSVPTLLYLAHVFYVMRKEEKLNKKEEELKVAQTDGVNVEMHLKQIEIKKFKYGIEEHGKVKMRGGLLRTYIISILFKSVFEVAFLLIQWYIYGFSLSAVYTCKRDPCPHQVDCFLSRPTEKTIFIIFMLVVSLVSLALNIIELFYAFFKGVKDRVKGKSDPYHATTGPLSPSKDCGSPKYAYFNGCSSPTAPLSPMSPPGYKLVTGDRNNSSCRNYNKQASEQNWANYSAEQNRMGQAGSTISNSHAQPFDFPDDNQNSKKLDAGHELQPLAIVDQRPSSRASSRASSRPRPDDLEI.

The Cytoplasmic segment spans residues 2–23 (GDWSALGKLLDKVQAYSTAGGK). Ser5 is subject to Phosphoserine. A helical membrane pass occupies residues 24–44 (VWLSVLFIFRILLLGTAVESA). The Extracellular portion of the chain corresponds to 45-76 (WGDEQSAFRCNTQQPGCENVCYDKSFPISHVR). Cystine bridges form between Cys54-Cys192 and Cys187-Cys198. Residues 77–97 (FWVLQIIFVSVPTLLYLAHVF) traverse the membrane as a helical segment. The Cytoplasmic segment spans residues 98-155 (YVMRKEEKLNKKEEELKVAQTDGVNVEMHLKQIEIKKFKYGIEEHGKVKMRGGLLRTY). Lys144 is covalently cross-linked (Glycyl lysine isopeptide (Lys-Gly) (interchain with G-Cter in SUMO)). The helical transmembrane segment at 156–176 (IISILFKSVFEVAFLLIQWYI) threads the bilayer. Topologically, residues 177–207 (YGFSLSAVYTCKRDPCPHQVDCFLSRPTEKT) are extracellular. The helical transmembrane segment at 208 to 228 (IFIIFMLVVSLVSLALNIIEL) threads the bilayer. The Cytoplasmic portion of the chain corresponds to 229–382 (FYAFFKGVKD…SRPRPDDLEI (154 aa)). A Glycyl lysine isopeptide (Lys-Gly) (interchain with G-Cter in SUMO) cross-link involves residue Lys237. Positions 244 to 382 (SDPYHATTGP…SRPRPDDLEI (139 aa)) are interaction with NOV. The residue at position 247 (Tyr247) is a Phosphotyrosine. A phosphoserine mark is found at Ser255, Ser257, and Ser262. Residues 264–382 (KYAYFNGCSS…SRPRPDDLEI (119 aa)) are interaction with UBQLN4. Cys271 is modified (S-nitrosocysteine). Thr275 carries the phosphothreonine modification. A phosphoserine mark is found at Ser306 and Ser314. The span at 317-332 (QNRMGQAGSTISNSHA) shows a compositional bias: polar residues. The disordered stretch occupies residues 317–382 (QNRMGQAGST…SRPRPDDLEI (66 aa)). Ser325 is modified (phosphoserine; by CK1). Residue Thr326 is modified to Phosphothreonine. Residues Ser328 and Ser330 each carry the phosphoserine; by CK1 modification. Positions 342–351 (QNSKKLDAGH) are enriched in basic and acidic residues. Residues Ser344 and Ser365 each carry the phosphoserine modification. A compositionally biased stretch (low complexity) spans 362 to 374 (RPSSRASSRASSR). The residue at position 368 (Ser368) is a Phosphoserine; by PKC/PRKCG and PKC/PRKCD. Ser369 and Ser373 each carry phosphoserine.

The protein belongs to the connexin family. Alpha-type (group II) subfamily. As to quaternary structure, a connexon is composed of a hexamer of connexins. Interacts with SGSM3. Interacts with RIC1/CIP150. Interacts with CNST and CSNK1D. Interacts (via C-terminus) with TJP1. Interacts (via C-terminus) with SRC (via SH3 domain). Interacts (not ubiquitinated) with UBQLN4 (via UBA domain). Interacts with NOV. Interacts with TMEM65. Interacts with ANK3/ANKG and PKP2. Post-translationally, phosphorylation at Ser-325, Ser-328 and Ser-330 by CK1 modulates gap junction assembly. Phosphorylated at Ser-368 by PRKCG; phosphorylation induces disassembly of gap junction plaques and inhibition of gap junction activity. Phosphorylation at Ser-368 by PRKCD triggers its internalization into small vesicles leading to proteasome-mediated degradation. Sumoylated with SUMO1, SUMO2 and SUMO3, which may regulate the level of functional Cx43 gap junctions at the plasma membrane. May be desumoylated by SENP1 or SENP2. In terms of processing, S-nitrosylation at Cys-271 is enriched at the muscle endothelial gap junction in arteries, it augments channel permeability and may regulate of smooth muscle cell to endothelial cell communication. Post-translationally, acetylated in the developing cortex; leading to delocalization from the cell membrane.

The protein resides in the cell membrane. Its subcellular location is the cell junction. It localises to the gap junction. The protein localises to the endoplasmic reticulum. In terms of biological role, gap junction protein that acts as a regulator of bladder capacity. A gap junction consists of a cluster of closely packed pairs of transmembrane channels, the connexons, through which materials of low MW diffuse from one cell to a neighboring cell. May play a critical role in the physiology of hearing by participating in the recycling of potassium to the cochlear endolymph. Negative regulator of bladder functional capacity: acts by enhancing intercellular electrical and chemical transmission, thus sensitizing bladder muscles to cholinergic neural stimuli and causing them to contract. May play a role in cell growth inhibition through the regulation of NOV expression and localization. Plays an essential role in gap junction communication in the ventricles. The chain is Gap junction alpha-1 protein (GJA1) from Sus scrofa (Pig).